A 723-amino-acid chain; its full sequence is Aspartate--tRNA(Asp/Asn) ligase 1 (723 aa).

Glu-206 contributes to the L-aspartate binding site. Positions 230–233 are aspartate; it reads QLFK. Arg-252 provides a ligand contact to L-aspartate. Residues 252–254 and Gln-261 contribute to the ATP site; that span reads RDE. His-481 is a binding site for L-aspartate. Glu-516 contributes to the ATP binding site. Residue Arg-523 coordinates L-aspartate. 568–571 is an ATP binding site; the sequence is GMDR.

Belongs to the class-II aminoacyl-tRNA synthetase family. Type 1 subfamily. Homodimer.

The protein resides in the cytoplasm. The catalysed reaction is tRNA(Asx) + L-aspartate + ATP = L-aspartyl-tRNA(Asx) + AMP + diphosphate. Its function is as follows. Aspartyl-tRNA synthetase with relaxed tRNA specificity since it is able to aspartylate not only its cognate tRNA(Asp) but also tRNA(Asn). Reaction proceeds in two steps: L-aspartate is first activated by ATP to form Asp-AMP and then transferred to the acceptor end of tRNA(Asp/Asn). In Syntrophus aciditrophicus (strain SB), this protein is Aspartate--tRNA(Asp/Asn) ligase 1.